A 921-amino-acid polypeptide reads, in one-letter code: Respiratory burst oxidase homolog protein D (921 aa).

A disordered region spans residues 1–71; that stretch reads MKMRRGNSSN…RSNSVAGGRG (71 aa). Residues 1–376 lie on the Cytoplasmic side of the membrane; that stretch reads MKMRRGNSSN…KYFILDNWQR (376 aa). A phosphoserine mark is found at S8, S9, S26, and S39. Over residues 21–31 the composition is skewed to polar residues; the sequence is NSDTNSDTESI. The segment covering 44-53 has biased composition (basic residues); that stretch reads RPKRASKKNA. 2 EF-hand-like regions span residues 193 to 203 and 230 to 241; these read SADSNGLLLSA and NNVSGDAITKEQ. 2 EF-hand domains span residues 253-288 and 297-332; these read SFDA…SASA and QAKE…APNQ. Residues D266, D268, D270, R272, and E277 each coordinate Ca(2+). Residues S339, S343, and S347 each carry the phosphoserine modification. The helical transmembrane segment at 377-397 threads the bilayer; sequence LWIMMLWLGICGGLFTYKFIQ. The Extracellular portion of the chain corresponds to 398 to 461; the sequence is YKNKAAYGVM…FDDSLNFHKV (64 aa). One can recognise a Ferric oxidoreductase domain in the interval 415–572; that stretch reads KGGAETLKFN…LFIIVYALLI (158 aa). The chain crosses the membrane as a helical span at residues 462–482; the sequence is IASGIVVGVLLHAGAHLTCDF. At 483–516 the chain is on the cytoplasmic side; it reads PRLIAADEDTYEPMEKYFGDQPTSYWWFVKGVEG. The chain crosses the membrane as a helical span at residues 517-537; the sequence is WTGIVMVVLMAIAFTLATPWF. Over 538–559 the chain is Extracellular; it reads RRNKLNLPNFLKKLTGFNAFWY. A helical transmembrane segment spans residues 560–580; sequence THHLFIIVYALLIVHGIKLYL. At 581–588 the chain is on the cytoplasmic side; sequence TKIWYQKT. The helical transmembrane segment at 589-606 threads the bilayer; it reads TWMYLAVPILLYASERLL. Topologically, residues 607 to 734 are extracellular; sequence RAFRSSIKPV…PYGAPAQDYK (128 aa). Positions 611–732 constitute an FAD-binding FR-type domain; sequence SSIKPVKMIK…DGPYGAPAQD (122 aa). A helical transmembrane segment spans residues 735–755; that stretch reads KYDVVLLVGLGIGATPMISIL. The Cytoplasmic portion of the chain corresponds to 756 to 921; it reads KDIINNMKGP…TKFDFHKENF (166 aa).

It belongs to the RBOH (TC 5.B.1.3) family. Monomer and homodimer. Interacts with BIK1 and FLS2. Interacts with PBL13. Binds to SIK1 upon flagellin perception and becomes activated by phosphorylation. In terms of processing, phosphorylated at Ser-39, Ser-343 and Ser-347 by BIK1 upon flagellin (flg22) treatment. Activated by phosphorylation at Ser-347 mediated by SIK1 and at Ser-8, Ser-9 and Ser-339 upon flagellin (e.g. flg22) perception. In terms of tissue distribution, more abundant in roots than in leaves, stems or inflorescences. Expressed in mesophyll and guard cells.

It is found in the membrane. Its activity is regulated as follows. Inhibited by diphenylene iodinium (DPI). Calcium-dependent NADPH oxidase that generates superoxide. Involved in the generation of reactive oxygen species (ROS) during incompatible interactions with pathogens, in response to pathogen-associated molecular pattern (PAMP)-triggered immunity (PTI) signaling and in UV-B and abscisic acid ROS-dependent signaling and via SIK1 mediated activation by phosphorylation. Might be required for ROS signal amplification during light stress. The protein is Respiratory burst oxidase homolog protein D of Arabidopsis thaliana (Mouse-ear cress).